We begin with the raw amino-acid sequence, 304 residues long: Recombination-associated protein RdgC (304 aa).

Belongs to the RdgC family.

The protein localises to the cytoplasm. It is found in the nucleoid. In terms of biological role, may be involved in recombination. The sequence is that of Recombination-associated protein RdgC from Shewanella baltica (strain OS185).